We begin with the raw amino-acid sequence, 688 residues long: Lipase (688 aa).

Positions 1 to 35 are cleaved as a signal peptide; sequence MKTRQNKYSIRKFSVGASSILIAALLFMGGGSAQA. Residues 31–309 are disordered; it reads GSAQAAEQQQ…KSAKQKQYKN (279 aa). Residues 36–302 constitute a propeptide, removed in mature form; that stretch reads AEQQQDKGTV…KNEDQTNKSA (267 aa). Over residues 45 to 54 the composition is skewed to polar residues; that stretch reads VENSTTQSIG. The segment covering 68–79 has biased composition (low complexity); sequence NKNVNEKSNVNS. Composition is skewed to basic and acidic residues over residues 84 to 95 and 103 to 143; these read ESLHNETPKNED and SQND…KHAS. Residues 144 to 172 show a composition bias toward polar residues; it reads ENNQTLHSKAAQSNEDVKTKPSQLDNTAA. Basic and acidic residues predominate over residues 173–183; it reads KQEDSQKENLS. Positions 184–211 are enriched in polar residues; that stretch reads KQDTQSSKTTDLLRATAQNQSKDSQSTE. Over residues 240 to 267 the composition is skewed to basic and acidic residues; it reads SKEEPLKVDKQANPTTDKDKSSKNDKGS. The segment covering 274–289 has biased composition (polar residues); it reads LESNAVATTNKQSKQQ. The active-site Nucleophile is the Ser-418. The active-site Charge relay system is the Asp-609. Asp-647 lines the Ca(2+) pocket. The Charge relay system role is filled by His-648. Ca(2+) is bound by residues Asp-650, Asp-655, and Asp-658.

It belongs to the AB hydrolase superfamily. Lipase family.

Its subcellular location is the secreted. It carries out the reaction a triacylglycerol + H2O = a diacylglycerol + a fatty acid + H(+). This is Lipase (lip) from Staphylococcus epidermidis (strain ATCC 12228 / FDA PCI 1200).